A 125-amino-acid chain; its full sequence is Homeobox protein HD-8 (125 aa).

The segment at residues 30–89 (EPDTRTRKTTFQMMVLKEVFKIAPHPSTLTKADLALMIKLPLKAVQIWFQNERSRKERGG) is a DNA-binding region (homeobox).

It is found in the nucleus. The sequence is that of Homeobox protein HD-8 (HD-8) from Encephalitozoon cuniculi (strain GB-M1) (Microsporidian parasite).